The chain runs to 169 residues: MKDAITSLIATYDVTGKYFDDNAVDTLNAYFSTASARIESVKIINANVSTIIKTAASALFDEQPELIAPGGNANTTRRYAACLRDIDYYLRYATYAIISADVDVLDERVLDGLKETYNSLGVSIAPTVRAIELLKNTSKELIKAAGISAVDFIDEPFDYMGKVLADSSL.

At Asn72 the chain carries N4-methylasparagine. Residue Cys82 participates in (2R,3E)-phycocyanobilin binding.

This sequence belongs to the phycobiliprotein family. In terms of assembly, heterodimer of an alpha and a beta chain. Contains one covalently linked phycocyanobilin chromophore.

The protein localises to the plastid. It localises to the cyanelle thylakoid membrane. Its function is as follows. Light-harvesting photosynthetic bile pigment-protein from the phycobiliprotein complex. Allophycocyanin has a maximum absorption at approximately 650 nanometers. The protein is Allophycocyanin subunit beta-18 (apcF) of Cyanophora paradoxa.